We begin with the raw amino-acid sequence, 424 residues long: UPF0229 protein Avin_46880 (424 aa).

A disordered region spans residues 57 to 108 (RDIDEPVLHHGRGGKQTIVHPGNKEFTAGERIPRPSGGGGGGSGSGKASNSG). Residues 92–101 (SGGGGGGSGS) show a composition bias toward gly residues.

This sequence belongs to the UPF0229 family.

In Azotobacter vinelandii (strain DJ / ATCC BAA-1303), this protein is UPF0229 protein Avin_46880.